The chain runs to 314 residues: Bifunctional riboflavin kinase/FMN adenylyltransferase (314 aa).

This sequence belongs to the RibF family.

It catalyses the reaction riboflavin + ATP = FMN + ADP + H(+). The enzyme catalyses FMN + ATP + H(+) = FAD + diphosphate. Its pathway is cofactor biosynthesis; FAD biosynthesis; FAD from FMN: step 1/1. It functions in the pathway cofactor biosynthesis; FMN biosynthesis; FMN from riboflavin (ATP route): step 1/1. In terms of biological role, catalyzes the phosphorylation of riboflavin to FMN followed by the adenylation of FMN to FAD. Can also catalyze the phosphorylation of the toxic riboflavin analogs 8-demethyl-8-aminoriboflavin (AF) to 8-demethyl-8-aminoriboflavin mononucleotide (AFMN) and roseoflavin (RoF) to roseoflavin mononucleotide (RoFMN), and the adenylation of AFMN to 8-demethyl-8-aminoriboflavin adenine dinucleotide (AFAD). The polypeptide is Bifunctional riboflavin kinase/FMN adenylyltransferase (Listeria monocytogenes serovar 1/2a (strain ATCC BAA-679 / EGD-e)).